An 800-amino-acid chain; its full sequence is Protein translocase subunit SecA (800 aa).

Residues glutamine 85, 103–107 (GEGKT), and aspartate 504 contribute to the ATP site.

It belongs to the SecA family. As to quaternary structure, monomer and homodimer. Part of the essential Sec protein translocation apparatus which comprises SecA, SecYEG and auxiliary proteins SecDF. Other proteins may also be involved.

The protein resides in the cell membrane. The protein localises to the cytoplasm. The catalysed reaction is ATP + H2O + cellular proteinSide 1 = ADP + phosphate + cellular proteinSide 2.. In terms of biological role, part of the Sec protein translocase complex. Interacts with the SecYEG preprotein conducting channel. Has a central role in coupling the hydrolysis of ATP to the transfer of proteins into and across the cell membrane, serving as an ATP-driven molecular motor driving the stepwise translocation of polypeptide chains across the membrane. This chain is Protein translocase subunit SecA, found in Lactobacillus delbrueckii subsp. bulgaricus (strain ATCC 11842 / DSM 20081 / BCRC 10696 / JCM 1002 / NBRC 13953 / NCIMB 11778 / NCTC 12712 / WDCM 00102 / Lb 14).